Consider the following 231-residue polypeptide: Urease subunit gamma/beta (231 aa).

The segment at 1–101 (MLLTPTELER…LVTVHQPIRP (101 aa)) is urease gamma. The interval 102-231 (GQLPLAVMPT…RARAQFFKGA (130 aa)) is urease beta.

It in the N-terminal section; belongs to the urease gamma subunit family. This sequence in the C-terminal section; belongs to the urease beta subunit family. In terms of assembly, heterohexamer of 3 UreC (alpha) and 3 UreAB (gamma/beta) subunits.

Its subcellular location is the cytoplasm. The enzyme catalyses urea + 2 H2O + H(+) = hydrogencarbonate + 2 NH4(+). Its pathway is nitrogen metabolism; urea degradation; CO(2) and NH(3) from urea (urease route): step 1/1. The polypeptide is Urease subunit gamma/beta (Pseudomonas syringae pv. syringae (strain B728a)).